The primary structure comprises 132 residues: uncharacterized protein (132 aa).

WD repeat units follow at residues 14 to 53 (DLQDDISSVCCSPCNRYIIIASGNNCQHIYYLCATNLEIL) and 58 to 97 (AHDDSIVHLVSTLDGKYIVSSGLDGLIKIWNFKTANLANV).

This is an uncharacterized protein from Acanthamoeba polyphaga (Amoeba).